We begin with the raw amino-acid sequence, 360 residues long: Aminomethyltransferase (360 aa).

The protein belongs to the GcvT family. As to quaternary structure, the glycine cleavage system is composed of four proteins: P, T, L and H.

The enzyme catalyses N(6)-[(R)-S(8)-aminomethyldihydrolipoyl]-L-lysyl-[protein] + (6S)-5,6,7,8-tetrahydrofolate = N(6)-[(R)-dihydrolipoyl]-L-lysyl-[protein] + (6R)-5,10-methylene-5,6,7,8-tetrahydrofolate + NH4(+). Its function is as follows. The glycine cleavage system catalyzes the degradation of glycine. This chain is Aminomethyltransferase, found in Pseudomonas syringae pv. tomato (strain ATCC BAA-871 / DC3000).